A 730-amino-acid chain; its full sequence is MFTGTIFNSLFTLPLVISQFVPPPTRPVDLWDPFKTTTTPFPHGGVNQGLNRDEVVVRLPLGDIVGKEVHLHNLPWTIHKDPTEELPKDGTHFDPNPLKPKNNITVFTFLGVPYAEPPTSQRRFKPPQQLTVFPGKQPYLAFNYAASCAQDVEKSPSPFVDHPYPFMVDEDCLYLNIFSPDISKNAQTTYPVIVFFHGGNFQTGSANEWPAHGLASRGMVVVTVNYRLGAFGFMSMGDSETGNYGLQDQRLALEFVKNNIVTFGGDPQAVTVVGHDAGAASIGFHMQSPYSRHLFRSAATMSGAEVSYHSYIGKTALAFNNTMKLGRYAGCTQAVAQHRWDCILTRSTGDIIDATRNIPIEYNRYLFMPTVDGKYLPGNPLWTLVNAPSGETSIMSPVPMLIGMNAQDGSEVVLEDRRLGEFSQFNDVDHEYLKSYSLEYCYRHNYSMNREATADAILSKYTFWPDRAAAWAIKENFIQFATDAYYTAPMQLSSHLHSSSGSRVFQYVNNYNFSRQHPNLLFIPDWMGVCRDCDLYLMFGYPFLPDELRPIGLRGINFTDTDRNASRTFSNIIRRFSYHQNPNFQFDGSWAAYEPRRHWYINFNYTHEEDWKIPGTLARDYRYQDVAFWNEYIPALVNYMTTTFSPENVAYRREIMVFKWITGVNVIIIALLIVLAGAFGYMVWGNKEDEEAAYKAENHQLVEYRDTGHSVSDATISSRTRSPRSRITNL.

The first 18 residues, 1–18 (MFTGTIFNSLFTLPLVIS), serve as a signal peptide directing secretion. Residues 19-663 (QFVPPPTRPV…EIMVFKWITG (645 aa)) are Extracellular-facing. N-linked (GlcNAc...) asparagine glycosylation is found at asparagine 103, asparagine 320, asparagine 445, asparagine 512, asparagine 557, asparagine 564, and asparagine 604. Residues 664 to 684 (VNVIIIALLIVLAGAFGYMVW) traverse the membrane as a helical segment. Topologically, residues 685-730 (GNKEDEEAAYKAENHQLVEYRDTGHSVSDATISSRTRSPRSRITNL) are cytoplasmic.

Belongs to the type-B carboxylesterase/lipase family. Expressed in the pharynx, intestine, and in several cells in the head including dopaminergic neurons.

The protein resides in the cell membrane. In terms of biological role, probable neuronal cell surface protein thought to be involved in cell-cell-interactions. Confers protection against oxidative stress. Plays a role in protecting dopaminergic neurons against oxidative stress-induced neurodegeneration. The chain is Neuroligin-like protein glit-1 from Caenorhabditis elegans.